The following is a 990-amino-acid chain: Presequence protease, mitochondrial (990 aa).

The transit peptide at 1 to 25 directs the protein to the mitochondrion; that stretch reads MLRLKSLKKPVQAVVRRFATTSAPT. A Zn(2+)-binding site is contributed by His89. Glu92 acts as the Proton acceptor in catalysis. His93 serves as a coordination point for Zn(2+). Residue Glu165 is part of the active site. Position 190 (Glu190) interacts with Zn(2+).

This sequence belongs to the peptidase M16 family. PreP subfamily. As to quaternary structure, monomer and homodimer; homodimerization is induced by binding of the substrate. Zn(2+) is required as a cofactor.

The protein resides in the mitochondrion intermembrane space. Its subcellular location is the mitochondrion matrix. In terms of biological role, degrades mitochondrial transit peptides after their cleavage in the intermembrane space or in the matrix, and presequence peptides; clearance of these peptides is required to keep the presequence processing machinery running. Preferentially cleaves the N-terminal side of paired basic amino acid residues. Also degrades other unstructured peptides. May function as an ATP-dependent peptidase as opposed to a metalloendopeptidase. The polypeptide is Presequence protease, mitochondrial (CYM1) (Yarrowia lipolytica (strain CLIB 122 / E 150) (Yeast)).